A 394-amino-acid chain; its full sequence is Elongation factor Tu (394 aa).

One can recognise a tr-type G domain in the interval 10–204 (KPHVNVGTIG…ALDSYIPEPQ (195 aa)). The G1 stretch occupies residues 19–26 (GHVDHGKT). 19–26 (GHVDHGKT) is a binding site for GTP. Thr26 is a Mg(2+) binding site. The interval 60–64 (GITIN) is G2. Positions 81–84 (DCPG) are G3. Residues 81-85 (DCPGH) and 136-139 (NKCD) each bind GTP. The segment at 136–139 (NKCD) is G4. Residues 174 to 176 (SAL) form a G5 region.

Belongs to the TRAFAC class translation factor GTPase superfamily. Classic translation factor GTPase family. EF-Tu/EF-1A subfamily. In terms of assembly, monomer.

The protein localises to the cytoplasm. It carries out the reaction GTP + H2O = GDP + phosphate + H(+). Functionally, GTP hydrolase that promotes the GTP-dependent binding of aminoacyl-tRNA to the A-site of ribosomes during protein biosynthesis. The protein is Elongation factor Tu of Shewanella putrefaciens (Pseudomonas putrefaciens).